We begin with the raw amino-acid sequence, 591 residues long: Myelin expression factor 2 (591 aa).

Residues methionine 1–arginine 92 form a disordered region. Positions glutamate 22–proline 36 are enriched in basic and acidic residues. Lysine 44 is covalently cross-linked (Glycyl lysine isopeptide (Lys-Gly) (interchain with G-Cter in SUMO2)). 2 stretches are compositionally biased toward basic and acidic residues: residues methionine 45–threonine 63 and tyrosine 74–glycine 87. RRM domains lie at asparagine 91–aspartate 169 and serine 224–lysine 301. Residues arginine 397 and arginine 417 each carry the omega-N-methylarginine modification. Residue serine 422 is modified to Phosphoserine. An RRM 3 domain is found at asparagine 514–asparagine 590.

As to quaternary structure, monomer. In terms of tissue distribution, highly expressed in the brain.

It localises to the nucleus. Its function is as follows. Transcriptional repressor of the myelin basic protein gene (MBP). Binds to the proximal MB1 element 5'-TTGTCC-3' of the MBP promoter. Its binding to MB1 and function are inhibited by PURA. The protein is Myelin expression factor 2 (Myef2) of Mus musculus (Mouse).